The primary structure comprises 209 residues: Ribosomal RNA large subunit methyltransferase E (209 aa).

The S-adenosyl-L-methionine site is built by glycine 63, tryptophan 65, aspartate 83, aspartate 99, and aspartate 124. Lysine 164 functions as the Proton acceptor in the catalytic mechanism.

Belongs to the class I-like SAM-binding methyltransferase superfamily. RNA methyltransferase RlmE family.

The protein resides in the cytoplasm. It carries out the reaction uridine(2552) in 23S rRNA + S-adenosyl-L-methionine = 2'-O-methyluridine(2552) in 23S rRNA + S-adenosyl-L-homocysteine + H(+). In terms of biological role, specifically methylates the uridine in position 2552 of 23S rRNA at the 2'-O position of the ribose in the fully assembled 50S ribosomal subunit. The sequence is that of Ribosomal RNA large subunit methyltransferase E from Klebsiella pneumoniae (strain 342).